Consider the following 206-residue polypeptide: Ras-related protein RABG3a (206 aa).

15–22 provides a ligand contact to GTP; that stretch reads GDSGVGKT. The Effector region signature appears at 37 to 45; it reads YKATIGADF. Residues 63-67, 125-128, and 158-159 contribute to the GTP site; these read DTAGQ, NKID, and SA. S-geranylgeranyl cysteine attachment occurs at residues C204 and C206. The residue at position 206 (C206) is a Cysteine methyl ester.

This sequence belongs to the small GTPase superfamily. Rab family.

It localises to the cell membrane. Functionally, intracellular vesicle trafficking and protein transport. The chain is Ras-related protein RABG3a (RABG3A) from Arabidopsis thaliana (Mouse-ear cress).